The sequence spans 103 residues: Large ribosomal subunit protein uL24 (103 aa).

The protein belongs to the universal ribosomal protein uL24 family. Part of the 50S ribosomal subunit.

One of two assembly initiator proteins, it binds directly to the 5'-end of the 23S rRNA, where it nucleates assembly of the 50S subunit. Its function is as follows. One of the proteins that surrounds the polypeptide exit tunnel on the outside of the subunit. This is Large ribosomal subunit protein uL24 from Histophilus somni (strain 129Pt) (Haemophilus somnus).